Consider the following 326-residue polypeptide: Homocysteine S-methyltransferase 1 (326 aa).

A Hcy-binding domain is found at 9–323 (LLEDLIEKCG…STIKAISRDL (315 aa)). Residues Cys241, Cys308, and Cys309 each coordinate Zn(2+).

Zn(2+) serves as cofactor. Expressed in roots, young leaves, florets and flowers. Not detected in old leaves.

It carries out the reaction S-methyl-L-methionine + L-homocysteine = 2 L-methionine + H(+). Its activity is regulated as follows. Inhibited by L-methionine. Its function is as follows. Catalyzes methyl transfer from S-methylmethionine to homocysteine. The highest preference is for DL-homocysteine &gt;&gt; DL-cysteine. Has no selenocysteine methyltransferase activity. The polypeptide is Homocysteine S-methyltransferase 1 (HMT1) (Brassica oleracea var. italica (Broccoli)).